The primary structure comprises 238 residues: Cysteine-rich venom protein kaouthin-2 (238 aa).

The first 19 residues, 1–19 (MIAFIVLLSLAAVLQQSSG), serve as a signal peptide directing secretion. Residues 20–25 (TVDFAS) constitute a propeptide that is removed on maturation. Residues 38–164 (VDKHNALRRS…SSKYLYVCQY (127 aa)) enclose the SCP domain. Disulfide bonds link cysteine 75/cysteine 153, cysteine 92/cysteine 165, cysteine 148/cysteine 162, cysteine 184/cysteine 191, cysteine 187/cysteine 196, cysteine 200/cysteine 233, cysteine 209/cysteine 227, and cysteine 218/cysteine 231. Residues 200–233 (CKHHNVFSNCQSLAKQNACQTEWMKSKCAASCFC) form the ShKT domain.

Expressed by the venom gland.

It is found in the secreted. The sequence is that of Cysteine-rich venom protein kaouthin-2 from Naja kaouthia (Monocled cobra).